The chain runs to 1106 residues: Zinc finger protein GLI1 (1106 aa).

Residues 1–20 (MFNSMTPPPISSYGEPCCLR) form an SNAG domain region. The interaction with SUFU stretch occupies residues 120–124 (SYGHL). 5 C2H2-type zinc fingers span residues 235-260 (TDCRWDGCSQEFDSQEQLVHHINSEH), 268-295 (FVCHWGGCSRELRPFKAQYMLVVHMRRH), 301-325 (HKCTFEGCRKSYSRLENLKTHLRSH), 331-356 (YMCEHEGCSKAFSNASDRAKHQNRTH), and 362-387 (YVCKLPGCTKRYTDPSSLRKHVKTVH). An interaction with DNA region spans residues 283-291 (KAQYMLVVH). 2 interaction with DNA regions span residues 345 to 350 (ASDRAK) and 375 to 381 (DPSSLRK). 5 disordered regions span residues 375-485 (DPSS…DEGP), 516-580 (GLKL…SLPG), 732-792 (YGGP…LYPG), 817-889 (EQGC…PTHS), and 914-942 (GREDAPAQEPSYQSPKFLGGSQVSPSRAK). Basic and acidic residues predominate over residues 413–428 (EPKREREGGPIREESR). Over residues 442-463 (PGAQSSCSSDHSPAGSAANTDS) the composition is skewed to polar residues. Lys-518 is subject to N6-acetyllysine. Low complexity-rich tracts occupy residues 544 to 560 (SSSSSISSAYTVSRRSS) and 737 to 753 (GAAAEPYGARGPGSLPL). Positions 754–766 (GPGPPTNYGPNPC) are enriched in pro residues. The span at 768–779 (QQASYPDPTQET) shows a compositional bias: polar residues. A Glycyl lysine isopeptide (Lys-Gly) (interchain with G-Cter in SUMO2) cross-link involves residue Lys-1003. Residues 1054–1087 (DEPQGLSPPPSHDQRGSSGHTPPPSGPPNMAVGN) are disordered.

Belongs to the GLI C2H2-type zinc-finger protein family. In terms of assembly, interacts with KIF7. Interacts with STK36. Interacts with ZIC1; the interaction enhances transcription activation. Interacts with SUFU; this inhibits transcriptional activation by GLI1. Post-translationally, phosphorylated in vitro by ULK3. In terms of processing, acetylation at Lys-518 down-regulates transcriptional activity. Deacetylated by HDAC1. Ubiquitinated by the CRL2(FEM1B) complex, suppressing GLI1 transcriptional activator activity. As to expression, detected in testis (at protein level). Testis, myometrium and fallopian tube. Also expressed in the brain with highest expression in the cerebellum, optic nerve and olfactory tract. Isoform 1 is detected in brain, spleen, pancreas, liver, kidney and placenta; isoform 2 is not detectable in these tissues.

It localises to the cytoplasm. The protein localises to the nucleus. In terms of biological role, acts as a transcriptional activator. Binds to the DNA consensus sequence 5'-GACCACCCA-3'. Regulates the transcription of specific genes during normal development. Plays a role in craniofacial development and digital development, as well as development of the central nervous system and gastrointestinal tract. Mediates SHH signaling. Plays a role in cell proliferation and differentiation via its role in SHH signaling. Acts as a transcriptional activator, but activates a different set of genes than isoform 1. Activates expression of CD24, unlike isoform 1. Mediates SHH signaling. Promotes cancer cell migration. In Homo sapiens (Human), this protein is Zinc finger protein GLI1 (GLI1).